We begin with the raw amino-acid sequence, 98 residues long: DNA-binding protein Fis (98 aa).

The H-T-H motif DNA-binding region spans 74 to 93 (QTRAAQMMGINRGTLRKKLK).

It belongs to the transcriptional regulatory Fis family. In terms of assembly, homodimer.

Functionally, activates ribosomal RNA transcription. Plays a direct role in upstream activation of rRNA promoters. This Proteus hauseri protein is DNA-binding protein Fis.